A 1401-amino-acid polypeptide reads, in one-letter code: Uveal autoantigen with coiled-coil domains and ankyrin repeats protein (1401 aa).

ANK repeat units follow at residues 25 to 53 (LMRA…KLDV), 54 to 83 (EGRS…DITT), 87 to 116 (AGRN…PTEH), 120 to 149 (QGRT…SVNA), 153 to 182 (DGRT…DINS), and 186 to 215 (QNRT…DVTL). The residue at position 265 (S265) is a Phosphoserine. Coiled coils occupy residues 273–361 (TKSN…SRFK), 423–827 (ENEI…EKIY), and 856–1368 (ALSS…VIAI). K1020 is covalently cross-linked (Glycyl lysine isopeptide (Lys-Gly) (interchain with G-Cter in SUMO2)).

Component of the apoptosome complex, composed of APAF1, pro-caspase-9 and UACA. In the complex, it probably interacts directly with APAF1. Interacts with LGALS3. Interacts with ARF6 and ACTB. Interacts with RAB39A. In terms of tissue distribution, highly expressed in muscle and heart, moderately in liver, kidney and pancreas, and weakly in placenta and lung.

It is found in the nucleus. The protein localises to the cytoplasm. It localises to the cytoskeleton. Regulates APAF1 expression and plays an important role in the regulation of stress-induced apoptosis. Promotes apoptosis by regulating three pathways, apoptosome up-regulation, LGALS3/galectin-3 down-regulation and NF-kappa-B inactivation. Regulates the redistribution of APAF1 into the nucleus after proapoptotic stress. Down-regulates the expression of LGALS3 by inhibiting NFKB1. Functionally, modulates isoactin dynamics to regulate the morphological alterations required for cell growth and motility. Interaction with ARF6 may modulate cell shape and motility after injury. May be involved in multiple neurite formation. The sequence is that of Uveal autoantigen with coiled-coil domains and ankyrin repeats protein (UACA) from Bos taurus (Bovine).